The primary structure comprises 338 residues: tRNA methyltransferase 10 homolog A (338 aa).

Disordered stretches follow at residues 1 to 91 and 296 to 338; these read MSSE…DRKR and RVEG…SVPH. Phosphoserine is present on serine 22. Positions 52–80 form a coiled coil; it reads KQWEEQRELRKQKRKEKRKRKQLERQCQP. Over residues 61–73 the composition is skewed to basic residues; the sequence is RKQKRKEKRKRKQ. The SAM-dependent MTase TRM10-type domain maps to 88-279; the sequence is DRKRIRRDVV…TILPQRKGAV (192 aa). Positions 308 to 328 are enriched in basic and acidic residues; the sequence is EENRHELDSTHEEEKQDKENS. The segment covering 329-338 has biased composition (polar residues); that stretch reads TESTVNSVPH. Serine 335 carries the post-translational modification Phosphoserine.

This sequence belongs to the class IV-like SAM-binding methyltransferase superfamily. TRM10 family. Interacts with tRNA.

The protein localises to the nucleus. It is found in the nucleolus. The enzyme catalyses guanosine(9) in tRNA + S-adenosyl-L-methionine = N(1)-methylguanosine(9) in tRNA + S-adenosyl-L-homocysteine + H(+). In terms of biological role, S-adenosyl-L-methionine-dependent guanine N(1)-methyltransferase that catalyzes the formation of N(1)-methylguanine at position 9 (m1G9) in tRNAs. Probably not able to catalyze formation of N(1)-methyladenine at position 9 (m1A9) in tRNAs. This Bos taurus (Bovine) protein is tRNA methyltransferase 10 homolog A (TRMT10A).